We begin with the raw amino-acid sequence, 125 residues long: Small ribosomal subunit protein bS6 (125 aa).

A disordered region spans residues 99 to 125; the sequence is ASPMVKAKDERRASAEVENNDFEDAEE. A compositionally biased stretch (basic and acidic residues) spans 104–113; it reads KAKDERRASA. Residues 116-125 show a composition bias toward acidic residues; it reads ENNDFEDAEE.

This sequence belongs to the bacterial ribosomal protein bS6 family.

Functionally, binds together with bS18 to 16S ribosomal RNA. This is Small ribosomal subunit protein bS6 from Mannheimia succiniciproducens (strain KCTC 0769BP / MBEL55E).